The chain runs to 315 residues: Glutathione synthetase (315 aa).

Residues 125-310 (KLYTAWFADL…ITGMLMDAIE (186 aa)) enclose the ATP-grasp domain. Position 151–207 (151–207 (WEKHGDIIMKPLDGMGGASIFRVKEGDPNIGVIAETLTELGNRYCMAQNYLPAIKDG)) interacts with ATP. 2 residues coordinate Mg(2+): Glu-281 and Asn-283.

Belongs to the prokaryotic GSH synthase family. The cofactor is Mg(2+). Mn(2+) serves as cofactor.

The catalysed reaction is gamma-L-glutamyl-L-cysteine + glycine + ATP = glutathione + ADP + phosphate + H(+). Its pathway is sulfur metabolism; glutathione biosynthesis; glutathione from L-cysteine and L-glutamate: step 2/2. This chain is Glutathione synthetase, found in Salmonella typhimurium (strain LT2 / SGSC1412 / ATCC 700720).